A 957-amino-acid chain; its full sequence is Collagen alpha-1(I) chain (957 aa).

The interval 1 to 957 is disordered; the sequence is GPMGPSGPRG…PGPPGPPGPP (957 aa). A compositionally biased stretch (low complexity) spans 23–33; the sequence is FPGEPGASGPM. Positions 45–59 are enriched in basic and acidic residues; the sequence is NGDDGEAGKPGRPGE. A Phosphoserine modification is found at serine 87. 2 stretches are compositionally biased toward low complexity: residues 95-113 and 125-138; these read DAGPAGPKGAPGQMGPRGI and PAGARGNDGATGAA. The segment covering 140-152 has biased composition (pro residues); it reads PPGPTGPAGPPGF. 2 stretches are compositionally biased toward low complexity: residues 186–210 and 219–228; these read AGAAGANGAPGIAGAPGFPGARGPS and SGPKGNSGEP. Residues 277–286 show a composition bias toward gly residues; the sequence is GERGGPGSRG. Low complexity-rich tracts occupy residues 330–356, 365–384, 426–453, 488–516, 576–590, 603–618, 649–665, and 707–731; these read KGITGSPGSPGPDGKTGPPGPAGQDGR, ARGQAGVMGFPGPKGAAGEP, QGPAGSPGFQGIPGPAGPPGEAGKPGEQ, PRGANGAPGNDGAKGDAGAPGAPGSQGAP, AGPSGPAGPTGARGA, AGFAGPPGADGQPGAK, SAGPPGATGFPGAAGRV, and AGEKGAPGADGPAGAPGTPGPQGIA. The residue at position 579 (serine 579) is a Phosphoserine. 2 stretches are compositionally biased toward pro residues: residues 772 to 782 and 818 to 833; these read PPGPMGPPGIA and AGPPGAPGAPGAPGPV. Residues 854–868 are compositionally biased toward low complexity; the sequence is IGPVGARGAAGPQGP. The segment covering 869 to 883 has biased composition (basic and acidic residues); the sequence is RGDKGETGEQGDRGI. Residues 902 to 935 show a composition bias toward low complexity; sequence PGEQGPSGASGPAGPRGPPGSAGSPGKDGINGIP. Residues 937-957 show a composition bias toward pro residues; that stretch reads PIGPPGPRPGPPGPPGPPGPP.

The protein belongs to the fibrillar collagen family. In terms of assembly, trimers of one alpha 2(I) and two alpha 1(I) chains. In terms of processing, prolines at the third position of the tripeptide repeating unit (G-X-Y) are hydroxylated in some or all of the chains. In terms of tissue distribution, forms the fibrils of tendon, ligaments and bones. In bones, the fibrils are mineralized with calcium hydroxyapatite.

Its subcellular location is the secreted. The protein localises to the extracellular space. It localises to the extracellular matrix. In terms of biological role, type I collagen is a member of group I collagen (fibrillar forming collagen). This Hippopotamus amphibius (Hippopotamus) protein is Collagen alpha-1(I) chain.